A 479-amino-acid polypeptide reads, in one-letter code: GTPase Obg (479 aa).

The Obg domain maps to 2–159 (PRFVDRVVIH…RDLTLELKTV (158 aa)). Positions 160–340 (ADVGLVGFPS…LIFGLSQMIS (181 aa)) constitute an OBG-type G domain. GTP is bound by residues 166–173 (GFPSAGKS), 191–195 (FTTLV), 212–215 (DVPG), 292–295 (NKID), and 321–323 (STA). The Mg(2+) site is built by S173 and T193. The region spanning 358–436 (PIPVDDSGFT…IGEMTFDWEP (79 aa)) is the OCT domain. The interval 434–479 (WEPQTPAGEPVAMSGRGTDPRLDSNKRVGAAERKAARSRRREHGDG) is disordered. Positions 451 to 468 (TDPRLDSNKRVGAAERKA) are enriched in basic and acidic residues. A compositionally biased stretch (basic residues) spans 469 to 479 (ARSRRREHGDG).

This sequence belongs to the TRAFAC class OBG-HflX-like GTPase superfamily. OBG GTPase family. In terms of assembly, monomer. Requires Mg(2+) as cofactor.

The protein resides in the cytoplasm. An essential GTPase which binds GTP, GDP and possibly (p)ppGpp with moderate affinity, with high nucleotide exchange rates and a fairly low GTP hydrolysis rate. Plays a role in control of the cell cycle, stress response, ribosome biogenesis and in those bacteria that undergo differentiation, in morphogenesis control. This is GTPase Obg from Mycobacterium tuberculosis (strain ATCC 25177 / H37Ra).